A 243-amino-acid chain; its full sequence is Outer membrane protein A (243 aa).

5 beta stranded membrane-spanning segments follow: residues L1–P8, L13–G21, P48–A57, W62–Q69, and M88–R96. Tandem repeats lie at residues A104 to P105, A106 to P107, A108 to P109, A110 to P111, and A112 to P113. The tract at residues A104–P113 is 5 X 2 AA tandem repeats of A-P. The OmpA-like domain occupies V115–I243. A disulfide bond links C215 and C229.

It belongs to the outer membrane OOP (TC 1.B.6) superfamily. OmpA family. In terms of assembly, monomer and homodimer.

Its subcellular location is the cell outer membrane. In terms of biological role, with TolR probably plays a role in maintaining the position of the peptidoglycan cell wall in the periplasm. Acts as a porin with low permeability that allows slow penetration of small solutes; an internal gate slows down solute passage. The protein is Outer membrane protein A of Serratia odorifera.